The sequence spans 647 residues: Leucine-rich repeat transmembrane protein FLRT3 (647 aa).

A signal peptide spans 1 to 28 (MITVPWSVFLIWTKIGLLLDMAPYSVAA). Residues 29–526 (KPCPSVCRCD…KEPYKNSSVP (498 aa)) are Extracellular-facing. The region spanning 30–62 (PCPSVCRCDVGFIYCNDRDLTSIPTGIPEDATN) is the LRRNT domain. 2 cysteine pairs are disulfide-bonded: Cys-31-Cys-37 and Cys-35-Cys-44. 10 LRR repeats span residues 58–82 (EDATNLFLQNNQINNAGIPSELKNL), 83–105 (RRVERIFLYHNSLDEFPTNLPKY), 107–126 (KELHLQENNIRTITYDSLSQ), 127–152 (IPYLEELHLDDNSVSAVSIEDGAFRD), 154–179 (IYLRLLFLSRNHLSTIPWGLPKTIEE), 181–197 (RLDDNRISTISELSLQD), 198–223 (LTNLKRLVLDGNLLNNHGLGDKVFMN), 225–246 (VNLTELSLVRNSLTAAPVNLPG), 247–269 (TNLRKLYLQENHINHVPPNAFSY), and 270–293 (LRQLYRLDMSNNNLSNLPQGVFDD). N-linked (GlcNAc...) asparagine glycosylation occurs at Asn-226. An LRRCT domain is found at 305 to 356 (NPWHCGCKMKWVRDWLQSLPLKVNVRGLMCQAPEKVRGMAIKDLNAELFDCK). Cysteines 309 and 334 form a disulfide. The Fibronectin type-III domain maps to 404-502 (PVRKIITIFV…ECIETETAPL (99 aa)). Residues 527-547 (LAAIIGGAVALVALALLALVC) traverse the membrane as a helical segment. Topologically, residues 548 to 647 (WYVHRNGALF…GIPDSDHSHS (100 aa)) are cytoplasmic. Residues 620-647 (LYKNSHSESSSNRSYRDSGIPDSDHSHS) form a disordered region.

In terms of processing, N-glycosylated. Post-translationally, proteolytic cleavage in the juxtamembrane region gives rise to a soluble ectodomain. Cleavage is probably effected by a metalloprotease.

It is found in the cell membrane. The protein localises to the endoplasmic reticulum membrane. The protein resides in the cell junction. Its subcellular location is the focal adhesion. It localises to the secreted. It is found in the cell projection. The protein localises to the axon. The protein resides in the growth cone membrane. In terms of biological role, modulates the structure and function of the apical ectodermal ridge (AER) that controls embryonic limb development. Functions in cell-cell adhesion, cell migration and axon guidance, exerting an attractive or repulsive role depending on its interaction partners. Plays a role in the spatial organization of brain neurons. Plays a role in vascular development. Plays a role in cell-cell adhesion via its interaction with latrophilins that are expressed at the surface of adjacent cells. Mediates axon attraction towards cells expressing NTN1. Mediates axon growth cone collapse and plays a repulsive role in neuron guidance via its interaction with UNC-5 family members. Plays a role in the regulation of the density of glutamaergic synapses. Plays a role in fibroblast growth factor-mediated signaling cascades. Required for normal morphogenesis during embryonic development, but not for normal embryonic patterning. The chain is Leucine-rich repeat transmembrane protein FLRT3 (FLRT3) from Gallus gallus (Chicken).